Reading from the N-terminus, the 545-residue chain is MAAKDVKFGNDARVKMLKGVNVLADAVKVTLGPKGRNVILDKSFGAPTITKDGVSVAREIELEDKFENMGAQMVKEVASKANDAAGDGTTTATVLAQAIVNEGLKAVAAGMNPMDLKRGIDKAVSAVVSELKNLSKPCETAKEIEQVGTISANSDSIVGQLISQAMEKVGKEGVITVEDGTGLEDELDVVEGMQFDRGYLSPYFINKPETATVELDNPYLLLVDKKISNIRELLPVLEGVAKAGKPLLIIAEDVEGEALATLVVNTMRGIVKVAAVKAPGFGDRRKAMLQDIAILTAGTVISEEIGMELEKATLEDLGQAKRVVINKDNTTIIDGIGDEAQIKGRVAQIRQQIEESTSDYDKEKLQERVAKLAGGVAVIKVGAATEVEMKEKKDRVDDALHATRAAVEEGIVAGGGVALVRAAAKVAASLKGDNEEQNVGIKLALRAMEAPLRQIVTNSGEEASVVASAVKNGEGNFGYNAGTEQYGDMIEMGILDPTKVTRSALQFAASVAGLMITTECMVTDLPKDDKADLGAAGMGGMGGMM.

ATP contacts are provided by residues 30–33, K51, 87–91, G415, and D496; these read TLGP and DGTTT.

The protein belongs to the chaperonin (HSP60) family. In terms of assembly, forms a cylinder of 14 subunits composed of two heptameric rings stacked back-to-back. Interacts with the co-chaperonin GroES.

Its subcellular location is the cytoplasm. The enzyme catalyses ATP + H2O + a folded polypeptide = ADP + phosphate + an unfolded polypeptide.. Its function is as follows. Together with its co-chaperonin GroES, plays an essential role in assisting protein folding. The GroEL-GroES system forms a nano-cage that allows encapsulation of the non-native substrate proteins and provides a physical environment optimized to promote and accelerate protein folding. This chain is Chaperonin GroEL, found in Haemophilus influenzae (strain 86-028NP).